A 661-amino-acid chain; its full sequence is Peroxisomal acyl-coenzyme A oxidase 1 (661 aa).

N6-succinyllysine occurs at positions 89 and 90. An FAD-binding site is contributed by Thr-139. The residue at position 159 (Lys-159) is an N6-succinyllysine. Gly-178 contacts FAD. An N6-acetyllysine modification is found at Lys-216. Position 241 is an N6-succinyllysine (Lys-241). 3 positions are modified to N6-acetyllysine: Lys-255, Lys-267, and Lys-272. An N6-succinyllysine modification is found at Lys-349. Glu-421 functions as the Proton acceptor in the catalytic mechanism. N6-acetyllysine; alternate occurs at positions 437, 446, 512, and 637. Lys-437, Lys-446, Lys-512, and Lys-637 each carry N6-succinyllysine; alternate. Lys-643 is modified (N6-succinyllysine). Ser-649 carries the post-translational modification Phosphoserine. Residue Lys-652 is modified to N6-acetyllysine. Lys-655 is subject to N6-succinyllysine. The short motif at Ser-659–Leu-661 is the Microbody targeting signal element.

Belongs to the acyl-CoA oxidase family. Homodimer. Interacts with LONP2. Requires FAD as cofactor.

Its subcellular location is the peroxisome. The catalysed reaction is a 2,3-saturated acyl-CoA + O2 = a (2E)-enoyl-CoA + H2O2. It catalyses the reaction hexadecanoyl-CoA + O2 = (2E)-hexadecenoyl-CoA + H2O2. It carries out the reaction dodecanoyl-CoA + O2 = (2E)-dodecenoyl-CoA + H2O2. The enzyme catalyses octanoyl-CoA + O2 = (2E)-octenoyl-CoA + H2O2. The catalysed reaction is decanoyl-CoA + O2 = (2E)-decenoyl-CoA + H2O2. It catalyses the reaction tetradecanoyl-CoA + O2 = (2E)-tetradecenoyl-CoA + H2O2. It carries out the reaction hexadecanedioyl-CoA + O2 = (2E)-hexadecenedioyl-CoA + H2O2. The enzyme catalyses tetracosanoyl-CoA + O2 = (2E)-tetracosenoyl-CoA + H2O2. The catalysed reaction is glutaryl-CoA + O2 = (2E)-glutaconyl-CoA + H2O2. It catalyses the reaction hexanoyl-CoA + O2 = (2E)-hexenoyl-CoA + H2O2. It carries out the reaction octadecanoyl-CoA + O2 = (2E)-octadecenoyl-CoA + H2O2. The enzyme catalyses (5Z,8Z,11Z,14Z,17Z)-eicosapentaenoyl-CoA + O2 = (2E,5Z,8Z,11Z,14Z,17Z)-icosahexaenoyl-CoA + H2O2. The catalysed reaction is (6Z,9Z,12Z,15Z,18Z,21Z)-tetracosahexaenoyl-CoA + O2 = (2E,6Z,9Z,12Z,15Z,18Z,21Z)-tetracosaheptaenoyl-CoA + H2O2. It functions in the pathway lipid metabolism; peroxisomal fatty acid beta-oxidation. In terms of biological role, involved in the initial and rate-limiting step of peroxisomal beta-oxidation of straight-chain saturated and unsaturated very-long-chain fatty acids. Catalyzes the desaturation of fatty acyl-CoAs such as palmitoyl-CoA (hexadecanoyl-CoA) to 2-trans-enoyl-CoAs ((2E)-enoyl-CoAs) such as (2E)-hexadecenoyl-CoA, and donates electrons directly to molecular oxygen (O(2)), thereby producing hydrogen peroxide (H(2)O(2)). Isoform 2 shows higher activity with hexadecanoyl-CoA as substrate than isoform 1. The chain is Peroxisomal acyl-coenzyme A oxidase 1 (ACOX1) from Phascolarctos cinereus (Koala).